Reading from the N-terminus, the 259-residue chain is uncharacterized protein (259 aa).

The signal sequence occupies residues 1–22 (MKHSKKLLLCISFLLITVFISG). C23 carries the N-palmitoyl cysteine lipid modification. C23 carries S-diacylglycerol cysteine lipidation.

The protein belongs to the staphylococcal tandem lipoprotein family.

The protein localises to the cell membrane. This is an uncharacterized protein from Staphylococcus epidermidis (strain ATCC 35984 / DSM 28319 / BCRC 17069 / CCUG 31568 / BM 3577 / RP62A).